The chain runs to 336 residues: Isopentenyl-diphosphate delta-isomerase (336 aa).

5–6 is a substrate binding site; sequence RK. Residues 60–62, S90, and N117 each bind FMN; that span reads AMT. Residue Q147 participates in substrate binding. E148 is a Mg(2+) binding site. FMN-binding positions include K179, S204, T209, 253–255, and 274–275; these read GVR and SR.

Belongs to the IPP isomerase type 2 family. Homooctamer. Dimer of tetramers. The cofactor is FMN. It depends on NADPH as a cofactor. Requires Mg(2+) as cofactor.

The protein resides in the cytoplasm. It catalyses the reaction isopentenyl diphosphate = dimethylallyl diphosphate. Involved in the biosynthesis of isoprenoids. Catalyzes the 1,3-allylic rearrangement of the homoallylic substrate isopentenyl (IPP) to its allylic isomer, dimethylallyl diphosphate (DMAPP). In Streptococcus pneumoniae (strain 70585), this protein is Isopentenyl-diphosphate delta-isomerase.